Here is a 332-residue protein sequence, read N- to C-terminus: Phospho-N-acetylmuramoyl-pentapeptide-transferase (332 aa).

Transmembrane regions (helical) follow at residues 9–29 (IYTI…IIPF), 55–75 (TIGG…AGLI), 79–99 (LWVA…DDFI), 115–135 (MSLQ…ISVM), 155–175 (IPQY…VVVA), 196–216 (IVAA…LAIF), 253–273 (AVAI…IYFA), and 312–332 (VVIV…LGLN).

The protein belongs to the glycosyltransferase 4 family. MraY subfamily. Requires Mg(2+) as cofactor.

The protein localises to the cell membrane. The catalysed reaction is UDP-N-acetyl-alpha-D-muramoyl-L-alanyl-gamma-D-glutamyl-meso-2,6-diaminopimeloyl-D-alanyl-D-alanine + di-trans,octa-cis-undecaprenyl phosphate = di-trans,octa-cis-undecaprenyl diphospho-N-acetyl-alpha-D-muramoyl-L-alanyl-D-glutamyl-meso-2,6-diaminopimeloyl-D-alanyl-D-alanine + UMP. Its pathway is cell wall biogenesis; peptidoglycan biosynthesis. Functionally, catalyzes the initial step of the lipid cycle reactions in the biosynthesis of the cell wall peptidoglycan: transfers peptidoglycan precursor phospho-MurNAc-pentapeptide from UDP-MurNAc-pentapeptide onto the lipid carrier undecaprenyl phosphate, yielding undecaprenyl-pyrophosphoryl-MurNAc-pentapeptide, known as lipid I. The chain is Phospho-N-acetylmuramoyl-pentapeptide-transferase from Alkaliphilus oremlandii (strain OhILAs) (Clostridium oremlandii (strain OhILAs)).